Here is a 149-residue protein sequence, read N- to C-terminus: MSQTHRILLLNGPNLNMLGAREPKHYGSISLESIEEKIQTLATQHNVKVECFQANSEGKLINKIHESFQQVDFILINPAAYTHTSVALRDALLAVSIPFVEIHLSNVHKREPFRHHSYFSDVAEGVICGLGAKGYEFAFLFAMDYLAKK.

Catalysis depends on Tyr-26, which acts as the Proton acceptor. Substrate is bound by residues Asn-77, His-83, and Asp-90. His-103 functions as the Proton donor in the catalytic mechanism. Substrate contacts are provided by residues 104-105 (LS) and Arg-114.

Belongs to the type-II 3-dehydroquinase family. As to quaternary structure, homododecamer.

It catalyses the reaction 3-dehydroquinate = 3-dehydroshikimate + H2O. It functions in the pathway metabolic intermediate biosynthesis; chorismate biosynthesis; chorismate from D-erythrose 4-phosphate and phosphoenolpyruvate: step 3/7. Catalyzes a trans-dehydration via an enolate intermediate. The sequence is that of 3-dehydroquinate dehydratase (aroQ) from Haemophilus influenzae (strain ATCC 51907 / DSM 11121 / KW20 / Rd).